The primary structure comprises 216 residues: Probable glutamine ABC transporter permease protein GlnM (216 aa).

The 189-residue stretch at 17–205 (FYHTLLASVI…VLTIPLSIGV (189 aa)) folds into the ABC transmembrane type-1 domain. A run of 5 helical transmembrane segments spans residues 21 to 41 (LLAS…VAVM), 63 to 83 (IPLL…GLRL), 85 to 105 (GFQA…AEAI), 132 to 152 (LHII…NQFL), and 181 to 201 (LVVF…TIPL).

Belongs to the binding-protein-dependent transport system permease family. The complex is composed of two ATP-binding proteins (GlnQ), two transmembrane proteins (GlnM and GlnP) and a solute-binding protein (GlnH).

It is found in the cell membrane. In terms of biological role, part of the ABC transporter complex GlnHMPQ involved in glutamine transport. Probably responsible for the translocation of the substrate across the membrane. The protein is Probable glutamine ABC transporter permease protein GlnM (glnM) of Bacillus subtilis (strain 168).